The chain runs to 568 residues: MKGIKVVETAFRDAHQSLLATRLRTRDMTPIAEEMDRVGFFSLEAWGGATFDTCIRYLNEDPWERLRELKEHVKRTPIQMLLRGQNLVGYKHYPDDIVRKFIEKSYENGVDVFRIFDALNDIRNMEYAIKVAREQEAHVQGVICYTISPYHTLESYVDFARELEALECDSVAIKDMAGLISPHDAYELVRALKEETDLMVNLHCHCTSGMTPMSYYAACEAGVDILDTAISPLSWGASQPPTESIVAALRDTPYDTGLDLEILKNIKKYFEEIRKKYSSILDPIAEQIDTDVLIYQIPGGMLSNLVAQLKEQNALDRYEEVLEEMPRVRKDMGYPPLVTPTSQIVGIQAVMNVLSGERYSMVTNEVKDYFRGLYGRPPAPLNEEVARKVIGDEKPIDCRPADILKPQYDECRRKGEEMGIIEKEEDILTLALYPAIAPKFLRGEIEEEPLEPPAEEMAPTGEVPTVFHVEVDGDEFEVKVVPTGYMTIEEAEPEPVDVEGAVKSTMQGMVVKLKVSEGDQVNAGDVVAVVEAMKMENDIQTPHGGVVEKIYTAEGEKVETGDIIMVIK.

The region spanning 4–264 is the Pyruvate carboxyltransferase domain; the sequence is IKVVETAFRD…DTGLDLEILK (261 aa). Residues 12-16 and Arg-83 each bind substrate; that span reads RDAHQ. Asp-13 is a binding site for a divalent metal cation. A divalent metal cation-binding residues include Lys-174, His-203, and His-205. Lys-174 bears the N6-carboxylysine mark. Thr-339 lines the substrate pocket. A Biotinyl-binding domain is found at 493–568; that stretch reads PEPVDVEGAV…ETGDIIMVIK (76 aa). The residue at position 534 (Lys-534) is an N6-biotinyllysine.

In terms of assembly, heterooctamer of four A and four B subunits. Requires Mg(2+) as cofactor. It depends on Mn(2+) as a cofactor. Co(2+) is required as a cofactor.

The enzyme catalyses hydrogencarbonate + pyruvate + ATP = oxaloacetate + ADP + phosphate + H(+). Its activity is regulated as follows. Inhibited by ADP and alpha-ketoglutarate. Functionally, pyruvate carboxylase catalyzes a 2-step reaction, involving the ATP-dependent carboxylation of the covalently attached biotin in the first step and the transfer of the carboxyl group to pyruvate in the second. This Methanothermobacter thermautotrophicus (strain ATCC 29096 / DSM 1053 / JCM 10044 / NBRC 100330 / Delta H) (Methanobacterium thermoautotrophicum) protein is Pyruvate carboxylase subunit B (pycB).